A 768-amino-acid chain; its full sequence is Phosphoribosylformylglycinamidine synthase subunit PurL (768 aa).

Residue H44 is part of the active site. 2 residues coordinate ATP: Y47 and K86. Mg(2+) is bound at residue E88. Residues 89–92 and R111 contribute to the substrate site; that span reads SHNH. H90 acts as the Proton acceptor in catalysis. A Mg(2+)-binding site is contributed by D112. Substrate is bound at residue Q235. D263 contacts Mg(2+). 307–309 is a binding site for substrate; that stretch reads ESQ. 2 residues coordinate ATP: D518 and G555. N556 contacts Mg(2+). Residue S558 participates in substrate binding.

This sequence belongs to the FGAMS family. As to quaternary structure, monomer. Part of the FGAM synthase complex composed of 1 PurL, 1 PurQ and 2 PurS subunits.

It localises to the cytoplasm. The catalysed reaction is N(2)-formyl-N(1)-(5-phospho-beta-D-ribosyl)glycinamide + L-glutamine + ATP + H2O = 2-formamido-N(1)-(5-O-phospho-beta-D-ribosyl)acetamidine + L-glutamate + ADP + phosphate + H(+). The protein operates within purine metabolism; IMP biosynthesis via de novo pathway; 5-amino-1-(5-phospho-D-ribosyl)imidazole from N(2)-formyl-N(1)-(5-phospho-D-ribosyl)glycinamide: step 1/2. Functionally, part of the phosphoribosylformylglycinamidine synthase complex involved in the purines biosynthetic pathway. Catalyzes the ATP-dependent conversion of formylglycinamide ribonucleotide (FGAR) and glutamine to yield formylglycinamidine ribonucleotide (FGAM) and glutamate. The FGAM synthase complex is composed of three subunits. PurQ produces an ammonia molecule by converting glutamine to glutamate. PurL transfers the ammonia molecule to FGAR to form FGAM in an ATP-dependent manner. PurS interacts with PurQ and PurL and is thought to assist in the transfer of the ammonia molecule from PurQ to PurL. In Synechococcus sp. (strain JA-2-3B'a(2-13)) (Cyanobacteria bacterium Yellowstone B-Prime), this protein is Phosphoribosylformylglycinamidine synthase subunit PurL.